The following is a 234-amino-acid chain: Phosphoglycolate phosphatase (234 aa).

D13 functions as the Nucleophile in the catalytic mechanism. Residues D13, D15, and D175 each contribute to the Mg(2+) site.

The protein belongs to the HAD-like hydrolase superfamily. CbbY/CbbZ/Gph/YieH family. In terms of assembly, monomer. Requires Mg(2+) as cofactor. Chloride serves as cofactor.

It carries out the reaction 2-phosphoglycolate + H2O = glycolate + phosphate. The protein operates within organic acid metabolism; glycolate biosynthesis; glycolate from 2-phosphoglycolate: step 1/1. Its function is as follows. Specifically catalyzes the dephosphorylation of 2-phosphoglycolate. Is involved in the dissimilation of the intracellular 2-phosphoglycolate formed during the DNA repair of 3'-phosphoglycolate ends, a major class of DNA lesions induced by oxidative stress. In Pectobacterium atrosepticum (strain SCRI 1043 / ATCC BAA-672) (Erwinia carotovora subsp. atroseptica), this protein is Phosphoglycolate phosphatase.